We begin with the raw amino-acid sequence, 411 residues long: Probable tRNA pseudouridine synthase D (411 aa).

Aspartate 81 serves as the catalytic Nucleophile. Residues glycine 154 to leucine 375 enclose the TRUD domain.

This sequence belongs to the pseudouridine synthase TruD family.

The enzyme catalyses uridine(13) in tRNA = pseudouridine(13) in tRNA. Its function is as follows. Could be responsible for synthesis of pseudouridine from uracil-13 in transfer RNAs. This Archaeoglobus fulgidus (strain ATCC 49558 / DSM 4304 / JCM 9628 / NBRC 100126 / VC-16) protein is Probable tRNA pseudouridine synthase D.